The following is a 315-amino-acid chain: Protein OPG185 (315 aa).

The signal sequence occupies residues 1 to 16 (MTRLPILLLLISLVYA). The region spanning 17-121 (TPFPQTSKKI…NDTDKVDYEE (105 aa)) is the Ig-like V-type domain. Over 17 to 279 (TPFPQTSKKI…SNYKTKDFVE (263 aa)) the chain is Virion surface. A disulfide bridge connects residues Cys34 and Cys103. Residues Asn37, Asn69, Asn112, and Asn161 are each glycosylated (N-linked (GlcNAc...) asparagine; by host). Polar residues predominate over residues 193 to 202 (NTVSASSGES). The tract at residues 193 to 213 (NTVSASSGESTTDETPEPITD) is disordered. Asn254 carries an N-linked (GlcNAc...) asparagine; by host glycan. The helical transmembrane segment at 280–303 (IFGITALIILSAVAIFCITYYIYN) threads the bilayer. At 304–315 (KRSRKYKTENKV) the chain is on the intravirion side.

Belongs to the orthopoxvirus OPG185 family. Heterodimerizes with OPG040. The heterodimer OPG185-OPG040 interacts with components of the entry fusion complex OPG143 and OPG094. Heterodimer with C3/VPC protein; disulfide-linked. Glycosylated; contains phosphate and sulfate-substituted glycans. O-glycosylation is required for hemagglutination and hemadsorption activities of infected cell membranes.

It is found in the virion membrane. It localises to the host membrane. In terms of biological role, prevents cell to cell fusion by interacting with and directing the viral OPG040 protein on the host plasma membrane. The OPG185-OPG040 complex associates with components of the entry fusion complex (EFC) presumably to avoid superinfection and syncytium formation. Via its interaction with C3/VCP protein, protects the infected cell and probably also the extracellular enveloped virus from complement attack. The chain is Protein OPG185 (OPG185) from Homo sapiens (Human).